The following is a 109-amino-acid chain: Nucleoid-associated protein YbaB (109 aa).

This sequence belongs to the YbaB/EbfC family. Homodimer.

The protein localises to the cytoplasm. It localises to the nucleoid. Functionally, binds to DNA and alters its conformation. May be involved in regulation of gene expression, nucleoid organization and DNA protection. This chain is Nucleoid-associated protein YbaB, found in Escherichia coli O127:H6 (strain E2348/69 / EPEC).